The chain runs to 1249 residues: Cell adhesion molecule-related/down-regulated by oncogenes (1249 aa).

The N-terminal stretch at 1-25 (MHSDPGPWHPLLCFLVLALSTSANS) is a signal peptide. The Extracellular segment spans residues 26 to 957 (DVTPRFTSKP…PSHSPTRNGD (932 aa)). 5 consecutive Ig-like C2-type domains span residues 29 to 113 (PRFT…KSVS), 120 to 212 (NDFE…LKLS), 217 to 307 (PRVD…VYYT), 314 to 400 (PSVS…ATVH), and 406 to 517 (PVIV…AYLT). Disulfide bonds link Cys-50-Cys-98, Cys-142-Cys-192, and Cys-244-Cys-292. 5 N-linked (GlcNAc...) asparagine glycosylation sites follow: Asn-181, Asn-289, Asn-296, Asn-344, and Asn-428. Intrachain disulfides connect Cys-335-Cys-382 and Cys-427-Cys-501. Disordered regions lie at residues 528–585 (EDIT…SPPQ) and 671–690 (TSKE…PPIG). The segment covering 545–566 (SETRVPDHSQINEHKPEPRVTE) has biased composition (basic and acidic residues). Fibronectin type-III domains lie at 577–675 (APII…SKER), 721–815 (APDR…VAGY), and 826–923 (GPRI…TKAR). Asn-870 carries an N-linked (GlcNAc...) asparagine glycan. Residues 929-952 (SEYPVLDLSTPSVPDRSSSPSHSP) are disordered. A compositionally biased stretch (low complexity) spans 937 to 952 (STPSVPDRSSSPSHSP). A helical membrane pass occupies residues 958–978 (FLYVIVGCVLGGMVLILLAFI). At 979–1249 (AMCLLKNRQQ…DHPQLQTQEA (271 aa)) the chain is on the cytoplasmic side. The disordered stretch occupies residues 1158–1202 (NCSEEIEEDQNEKETQLSANSVCPEEATQTGTEQHEGEDCTKTED). The span at 1159 to 1168 (CSEEIEEDQN) shows a compositional bias: acidic residues. The segment covering 1173-1189 (QLSANSVCPEEATQTGT) has biased composition (polar residues). Residues 1190-1202 (EQHEGEDCTKTED) show a composition bias toward basic and acidic residues.

It is found in the cell membrane. In terms of biological role, component of a cell-surface receptor complex that mediates cell-cell interactions between muscle precursor cells. Promotes differentiation of myogenic cells. The chain is Cell adhesion molecule-related/down-regulated by oncogenes (cdon) from Xenopus laevis (African clawed frog).